The primary structure comprises 269 residues: Alcohol dehydrogenase-related 31 kDa protein (269 aa).

11–34 (YVADCGGIALETCKVLMTKNIAKL) contributes to the NAD(+) binding site. Ser-139 lines the substrate pocket. Tyr-152 serves as the catalytic Proton acceptor.

This sequence belongs to the short-chain dehydrogenases/reductases (SDR) family.

In Drosophila lebanonensis (Fruit fly), this protein is Alcohol dehydrogenase-related 31 kDa protein (Adhr).